The sequence spans 147 residues: Small ribosomal subunit protein bS6 (147 aa).

Residues Ala103–Glu147 are disordered. A compositionally biased stretch (acidic residues) spans Gly133–Glu147.

Belongs to the bacterial ribosomal protein bS6 family.

In terms of biological role, binds together with bS18 to 16S ribosomal RNA. The chain is Small ribosomal subunit protein bS6 from Syntrophobacter fumaroxidans (strain DSM 10017 / MPOB).